The chain runs to 187 residues: Phosphatidylethanolamine-binding protein 1 (187 aa).

N-acetylalanine; in peptide hippocampal cholinergic neurostimulating is present on alanine 2. Serine 6 bears the Phosphoserine mark. The residue at position 42 (threonine 42) is a Phosphothreonine. Residues serine 51, serine 52, serine 54, serine 98, and serine 132 each carry the phosphoserine modification. Positions 93 to 134 are interaction with RAF1; the sequence is KGNDISSGTVLSDYVGSGPPSGTGLHRYVWLVYEQEQPLSCD.

This sequence belongs to the phosphatidylethanolamine-binding protein family. In terms of assembly, has a tendency to form dimers by disulfide cross-linking. Interacts with RAF1 and this interaction is enhanced if RAF1 is phosphorylated on residues 'Ser-338', 'Ser-339', 'Tyr-340' and 'Tyr-341'. Interacts with ALOX15; in response to IL13/interleukin-13, prevents the interaction of PEBP1 with RAF1 to activate the ERK signaling cascade. As to expression, HCNP is expressed in brain. Increased expression in aged senescence-accelerated mice.

The protein localises to the cytoplasm. Functionally, binds ATP, opioids and phosphatidylethanolamine. Has lower affinity for phosphatidylinositol and phosphatidylcholine. Serine protease inhibitor which inhibits thrombin, neuropsin and chymotrypsin but not trypsin, tissue type plasminogen activator and elastase. Inhibits the kinase activity of RAF1 by inhibiting its activation and by dissociating the RAF1/MEK complex and acting as a competitive inhibitor of MEK phosphorylation. In terms of biological role, HCNP may be involved in the function of the presynaptic cholinergic neurons of the central nervous system. HCNP increases the production of choline acetyltransferase but not acetylcholinesterase. Seems to be mediated by a specific receptor. The chain is Phosphatidylethanolamine-binding protein 1 (Pebp1) from Mus musculus (Mouse).